The chain runs to 63 residues: Large ribosomal subunit protein bL35 (63 aa).

It belongs to the bacterial ribosomal protein bL35 family.

This chain is Large ribosomal subunit protein bL35, found in Campylobacter concisus (strain 13826).